Consider the following 982-residue polypeptide: Ubiquitin carboxyl-terminal hydrolase 15 (982 aa).

Residues 7–118 form the DUSP domain; that stretch reads VDLETQRSEV…SQQPIARKVV (112 aa). The USP domain maps to 288 to 933; sequence CGLSNLGNTC…AAYVLFYQRQ (646 aa). Cysteine 297 functions as the Nucleophile in the catalytic mechanism. Residues 623–695 are disordered; the sequence is TEENDGSLHC…DNDSENGLCT (73 aa). The span at 655–672 shows a compositional bias: acidic residues; it reads METDEPDDESSQDQELPS. The active-site Proton acceptor is histidine 891. The segment at 950-982 is disordered; sequence QGASAATGAPHESDEESNEDENDIENENCMHTN. Residues 962–975 show a composition bias toward acidic residues; sequence SDEESNEDENDIEN.

The protein belongs to the peptidase C19 family.

It localises to the cytoplasm. Its subcellular location is the nucleus. The catalysed reaction is Thiol-dependent hydrolysis of ester, thioester, amide, peptide and isopeptide bonds formed by the C-terminal Gly of ubiquitin (a 76-residue protein attached to proteins as an intracellular targeting signal).. Hydrolase that removes conjugated ubiquitin from target proteins and regulates various pathways such as the TGF-beta receptor signaling and NF-kappa-B pathways. Acts as a key regulator of TGF-beta receptor signaling pathway, but the precise mechanism is still unclear: according to a report, acts by promoting deubiquitination of monoubiquitinated R-SMADs, thereby alleviating inhibition of R-SMADs and promoting activation of TGF-beta target genes. According to another reports, regulates the TGF-beta receptor signaling pathway by mediating deubiquitination and stabilization of tgfbr1, leading to an enhanced TGF-beta signal. May also regulate gene expression and/or DNA repair through the deubiquitination of histone H2B. Involved in endosome organization by mediating deubiquitination of rnf26 target(s), releasing vesicles that are restrained in the perinuclear region. In Xenopus tropicalis (Western clawed frog), this protein is Ubiquitin carboxyl-terminal hydrolase 15 (usp15).